We begin with the raw amino-acid sequence, 318 residues long: Glycine--tRNA ligase alpha subunit (318 aa).

A disordered region spans residues 298 to 318 (EAGGSSPSTSRQGEAPRGESQ). Residues 300–309 (GGSSPSTSRQ) are compositionally biased toward polar residues.

Belongs to the class-II aminoacyl-tRNA synthetase family. In terms of assembly, tetramer of two alpha and two beta subunits.

Its subcellular location is the cytoplasm. It carries out the reaction tRNA(Gly) + glycine + ATP = glycyl-tRNA(Gly) + AMP + diphosphate. The polypeptide is Glycine--tRNA ligase alpha subunit (Rhodopseudomonas palustris (strain BisB18)).